The sequence spans 209 residues: Redox-sensing transcriptional repressor Rex (209 aa).

Residues 16–55 (LYYRFIQNLSLSGKQRVSSAELSEAVKVDSATIRRDFSYF) constitute a DNA-binding region (H-T-H motif). Position 90-95 (90-95 (GVGNLG)) interacts with NAD(+).

Belongs to the transcriptional regulatory Rex family. Homodimer.

Its subcellular location is the cytoplasm. In terms of biological role, modulates transcription in response to changes in cellular NADH/NAD(+) redox state. This is Redox-sensing transcriptional repressor Rex from Bacillus cereus (strain G9842).